A 512-amino-acid chain; its full sequence is tRNA-2-methylthio-N(6)-dimethylallyladenosine synthase (512 aa).

Residues 23 to 139 (RTYQVRTYGC…LPTLLERARH (117 aa)) enclose the MTTase N-terminal domain. The [4Fe-4S] cluster site is built by cysteine 32, cysteine 68, cysteine 102, cysteine 176, cysteine 180, and cysteine 183. One can recognise a Radical SAM core domain in the interval 162 to 398 (RESAYAAWVS…IELQERISLE (237 aa)). The TRAM domain occupies 401 to 469 (REQVGRAVEL…PHHLIADAPI (69 aa)). A disordered region spans residues 477–512 (AGDAHAAGQKPRTGVGLGMPRIGAPAPSATAEGCGC).

This sequence belongs to the methylthiotransferase family. MiaB subfamily. As to quaternary structure, monomer. [4Fe-4S] cluster serves as cofactor.

It localises to the cytoplasm. The catalysed reaction is N(6)-dimethylallyladenosine(37) in tRNA + (sulfur carrier)-SH + AH2 + 2 S-adenosyl-L-methionine = 2-methylsulfanyl-N(6)-dimethylallyladenosine(37) in tRNA + (sulfur carrier)-H + 5'-deoxyadenosine + L-methionine + A + S-adenosyl-L-homocysteine + 2 H(+). Catalyzes the methylthiolation of N6-(dimethylallyl)adenosine (i(6)A), leading to the formation of 2-methylthio-N6-(dimethylallyl)adenosine (ms(2)i(6)A) at position 37 in tRNAs that read codons beginning with uridine. The protein is tRNA-2-methylthio-N(6)-dimethylallyladenosine synthase of Mycolicibacterium smegmatis (strain ATCC 700084 / mc(2)155) (Mycobacterium smegmatis).